Reading from the N-terminus, the 329-residue chain is Phytochromobilin:ferredoxin oxidoreductase, chloroplastic (329 aa).

The N-terminal 45 residues, methionine 1 to arginine 45, are a transit peptide targeting the chloroplast.

This sequence belongs to the HY2 family.

The protein resides in the plastid. It is found in the chloroplast. It catalyses the reaction (3Z)-phytochromobilin + 2 oxidized [2Fe-2S]-[ferredoxin] = biliverdin IXalpha + 2 reduced [2Fe-2S]-[ferredoxin] + 2 H(+). Its function is as follows. Catalyzes the two-electron reduction of biliverdin IX-alpha to the tetrapyrrole chromophore phytochromobilin (PPhiB). This Arabidopsis thaliana (Mouse-ear cress) protein is Phytochromobilin:ferredoxin oxidoreductase, chloroplastic.